Here is a 348-residue protein sequence, read N- to C-terminus: Phospho-N-acetylmuramoyl-pentapeptide-transferase (348 aa).

Transmembrane regions (helical) follow at residues 11 to 31 (SWML…IFLG), 68 to 88 (AGGI…LPLG), 92 to 112 (TWLF…DDII), 128 to 148 (FVIQ…IYKG), 165 to 185 (VGHS…TIVG), 196 to 216 (LDGL…VVAL), 222 to 242 (PLAQ…FAFL), 251 to 271 (VFMG…CAVM), 276 to 296 (LLLI…ILQV), and 326 to 346 (VVAR…IAAL).

It belongs to the glycosyltransferase 4 family. MraY subfamily. Mg(2+) is required as a cofactor.

It is found in the cell inner membrane. The enzyme catalyses UDP-N-acetyl-alpha-D-muramoyl-L-alanyl-gamma-D-glutamyl-meso-2,6-diaminopimeloyl-D-alanyl-D-alanine + di-trans,octa-cis-undecaprenyl phosphate = di-trans,octa-cis-undecaprenyl diphospho-N-acetyl-alpha-D-muramoyl-L-alanyl-D-glutamyl-meso-2,6-diaminopimeloyl-D-alanyl-D-alanine + UMP. It functions in the pathway cell wall biogenesis; peptidoglycan biosynthesis. In terms of biological role, catalyzes the initial step of the lipid cycle reactions in the biosynthesis of the cell wall peptidoglycan: transfers peptidoglycan precursor phospho-MurNAc-pentapeptide from UDP-MurNAc-pentapeptide onto the lipid carrier undecaprenyl phosphate, yielding undecaprenyl-pyrophosphoryl-MurNAc-pentapeptide, known as lipid I. The polypeptide is Phospho-N-acetylmuramoyl-pentapeptide-transferase (Chlamydia caviae (strain ATCC VR-813 / DSM 19441 / 03DC25 / GPIC) (Chlamydophila caviae)).